We begin with the raw amino-acid sequence, 443 residues long: Trigger factor (443 aa).

Positions 168-254 (GDFVTIDFEG…IKNLKEKKLP (87 aa)) constitute a PPIase FKBP-type domain.

It belongs to the FKBP-type PPIase family. Tig subfamily.

It is found in the cytoplasm. The enzyme catalyses [protein]-peptidylproline (omega=180) = [protein]-peptidylproline (omega=0). Its function is as follows. Involved in protein export. Acts as a chaperone by maintaining the newly synthesized protein in an open conformation. Functions as a peptidyl-prolyl cis-trans isomerase. The chain is Trigger factor from Syntrophus aciditrophicus (strain SB).